The sequence spans 285 residues: N(G),N(G)-dimethylarginine dimethylaminohydrolase 1 (285 aa).

N-acetylalanine is present on Ala-2. Leu-30 serves as a coordination point for substrate. Phosphoserine is present on Ser-33. Positions 73, 78, 79, 98, and 145 each coordinate substrate. The active-site Proton donor is His-173. Cys-222 carries the post-translational modification S-nitrosocysteine. Val-268 provides a ligand contact to substrate. S-nitrosocysteine is present on Cys-274. The Nucleophile role is filled by Cys-274. Residue Cys-274 coordinates Zn(2+).

The protein belongs to the DDAH family. Monomer. In terms of tissue distribution, detected in red blood cells (at protein level). Widely distributed, high amounts found in kidney, brain, aorta and pancreas.

It catalyses the reaction N(omega),N(omega)-dimethyl-L-arginine + H2O = dimethylamine + L-citrulline. It carries out the reaction N(omega)-methyl-L-arginine + H2O = L-citrulline + methylamine. Its activity is regulated as follows. Inhibited by zinc ions. Its function is as follows. Hydrolyzes N(G),N(G)-dimethyl-L-arginine (ADMA) and N(G)-monomethyl-L-arginine (MMA) which act as inhibitors of NOS. Has therefore a role in the regulation of nitric oxide generation. The protein is N(G),N(G)-dimethylarginine dimethylaminohydrolase 1 (Ddah1) of Rattus norvegicus (Rat).